Here is a 98-residue protein sequence, read N- to C-terminus: Cysteine-rich and transmembrane domain-containing protein WIH2 (98 aa).

The disordered stretch occupies residues 1 to 77 (MSQYNQPPVG…PPQHQQQQSS (77 aa)). A compositionally biased stretch (pro residues) spans 9–21 (VGVPPPQGYPPEG). Residues 37–55 (YPQQGYPPQGYPQQGYPQQ) are compositionally biased toward low complexity. Positions 56 to 70 (GYPPPYAPQYPPPPQ) are enriched in pro residues. The chain crosses the membrane as a helical span at residues 75–92 (QSSPGFLEGCLAALCCCC).

The protein belongs to the CYSTM1 family. Expressed in floral organ primordia.

The protein resides in the membrane. Required for the promotion of megasporogenesis, or promotion of germ cell formation from somatic precursor cells. Acts redundantly with WIH1. Functions in a genetic pathway downstream of SPL/NZZ and WUS and together with TRN2 in promoting megasporogenesis. The sequence is that of Cysteine-rich and transmembrane domain-containing protein WIH2 from Arabidopsis thaliana (Mouse-ear cress).